The chain runs to 330 residues: Ribosome production factor 1 (330 aa).

2 disordered regions span residues 1-32 (MKAV…FPPT) and 53-83 (EEKR…KEVP). The span at 55-70 (KRKKRMELKKKKKKER) shows a compositional bias: basic residues. Over residues 71-83 (KALDDKAPPKEVP) the composition is skewed to basic and acidic residues. The 184-residue stretch at 123-306 (PKVLITTSDR…LRSLQKGTFD (184 aa)) folds into the Brix domain. An RNA-binding region spans residues 284–301 (VGIQELGPRFTLKLRSLQ).

It localises to the nucleus. The protein localises to the nucleolus. In terms of biological role, may be required for ribosome biogenesis. The chain is Ribosome production factor 1 (rpf1) from Danio rerio (Zebrafish).